The following is a 243-amino-acid chain: Putative outer membrane protein RP075 (243 aa).

Residues 1 to 23 form the signal peptide; that stretch reads MLRIVKKLWVILFISNISINSFA.

Belongs to the OmpW/AlkL family.

It localises to the cell outer membrane. The chain is Putative outer membrane protein RP075 from Rickettsia prowazekii (strain Madrid E).